Reading from the N-terminus, the 422-residue chain is Replication factor C large subunit (422 aa).

63–70 (GPPGIGKT) lines the ATP pocket.

It belongs to the activator 1 small subunits family. RfcL subfamily. In terms of assembly, heteromultimer composed of small subunits (RfcS) and large subunits (RfcL).

Part of the RFC clamp loader complex which loads the PCNA sliding clamp onto DNA. This is Replication factor C large subunit from Pyrobaculum neutrophilum (strain DSM 2338 / JCM 9278 / NBRC 100436 / V24Sta) (Thermoproteus neutrophilus).